Reading from the N-terminus, the 203-residue chain is Protein GrpE (203 aa).

Positions 1 to 20 (MSDNGDNNTKSPQHNNPQPN) are enriched in polar residues. The interval 1–46 (MSDNGDNNTKSPQHNNPQPNEKSDGKVQPGQPQVNPQRKFTAGINK) is disordered.

Belongs to the GrpE family. Homodimer.

It is found in the cytoplasm. In terms of biological role, participates actively in the response to hyperosmotic and heat shock by preventing the aggregation of stress-denatured proteins, in association with DnaK and GrpE. It is the nucleotide exchange factor for DnaK and may function as a thermosensor. Unfolded proteins bind initially to DnaJ; upon interaction with the DnaJ-bound protein, DnaK hydrolyzes its bound ATP, resulting in the formation of a stable complex. GrpE releases ADP from DnaK; ATP binding to DnaK triggers the release of the substrate protein, thus completing the reaction cycle. Several rounds of ATP-dependent interactions between DnaJ, DnaK and GrpE are required for fully efficient folding. This Ehrlichia chaffeensis (strain ATCC CRL-10679 / Arkansas) protein is Protein GrpE.